We begin with the raw amino-acid sequence, 287 residues long: MALWIAVLLGVVQGIFMFLPVSSTAHMVLLEHWLIGRDHPMPAPESAEMILFNLVVHVGTLVSIVVVFAPSLLRFTRYSLRDAYGWARAGRFQGPPLYARLFLLGMLSVLFTGVVGLTLKATFEQVFANPWMIAFTLILTGALLFWTDKLPPRRRGLRQTGVGTATLIGVAQGFALMPGLSRSAMTIVFGLFAGLKRRWAAEYSFFLAIPTICAATLLQAIEVYQLGGLESVSVAALITGFVVAAGVGIVSLKLVIYFLYRAQLKVFSFYVWALAAAILLGWIDLPI.

Helical transmembrane passes span 1–21 (MALW…FLPV), 49–69 (MILF…VVFA), 101–121 (LFLL…TLKA), 126–146 (VFAN…LLFW), 160–180 (TGVG…MPGL), 203–223 (YSFF…AIEV), 232–252 (VSVA…IVSL), and 267–287 (FSFY…DLPI).

This sequence belongs to the UppP family.

It is found in the cell inner membrane. The catalysed reaction is di-trans,octa-cis-undecaprenyl diphosphate + H2O = di-trans,octa-cis-undecaprenyl phosphate + phosphate + H(+). Functionally, catalyzes the dephosphorylation of undecaprenyl diphosphate (UPP). Confers resistance to bacitracin. The polypeptide is Undecaprenyl-diphosphatase (Halorhodospira halophila (strain DSM 244 / SL1) (Ectothiorhodospira halophila (strain DSM 244 / SL1))).